Here is a 2462-residue protein sequence, read N- to C-terminus: Piezo-type mechanosensitive ion channel homolog (2462 aa).

Helical transmembrane passes span 5-25 (LVGF…WSVI), 27-47 (FLDL…GYRF), 57-77 (IFIF…IWAA), 105-125 (TVMY…ADIY), 163-183 (AVQL…FFIG), 207-227 (LYIY…PINF), 248-268 (EGPD…LSYV), 325-345 (FFTY…FHFA), 347-367 (LCAF…PSLF), 374-394 (GLLL…NVAF), 404-424 (FGLG…FLYL), 467-487 (LIFL…IFFL), 502-522 (SLIL…IDLV), 554-574 (IALL…LFSF), 653-673 (VYLV…LLWI), 694-714 (AVLV…QLWL), 730-750 (APLL…QLYS), 792-812 (FYAS…GLVI), and 826-846 (SFLI…LWGM). A disordered region spans residues 927–947 (ASVSSSNGENPSSTDHASISM). Low complexity predominate over residues 928–939 (SVSSSNGENPSS). The next 8 membrane-spanning stretches (helical) occupy residues 1027-1047 (FWIE…ALLL), 1050-1070 (FALL…CVLL), 1078-1098 (LWPV…VATW), 1143-1160 (TLIS…KLRA), 1204-1224 (LYCY…TGTL), 1228-1248 (ILHL…LEIL), 1260-1280 (VYNF…VGNF), and 1310-1330 (SALV…MFSS). Residues 1347–1400 (AIVREQEKKAARKTEQLQQIREAEEKKRQRNLQVEKMKSEMLNLRVQLHRMNSD) are a coiled coil. The tract at residues 1543-1583 (SDTNEQSSVDDEVYDEMESQKRKHTPFERSTSLQSDRSSDG) is disordered. Residues 1550–1559 (SVDDEVYDEM) are compositionally biased toward acidic residues. Positions 1570 to 1583 (ERSTSLQSDRSSDG) are enriched in polar residues. The next 8 membrane-spanning stretches (helical) occupy residues 1611 to 1631 (FIIA…AALF), 1647 to 1667 (VIML…QIII), 1916 to 1936 (YIFG…QSVI), 1956 to 1976 (FVII…IYLC), 1984 to 2004 (VYYL…AWSI), 2012 to 2032 (AGLA…LQAI), 2130 to 2150 (GICL…MYSS), and 2369 to 2389 (FLGD…FVLA).

The protein belongs to the PIEZO (TC 1.A.75) family.

The protein localises to the membrane. In terms of biological role, pore-forming subunit of a mechanosensitive non-specific cation channel, that conducts both sodium and potassium ions. The protein is Piezo-type mechanosensitive ion channel homolog of Arabidopsis thaliana (Mouse-ear cress).